The following is a 528-amino-acid chain: GMP synthase [glutamine-hydrolyzing] (528 aa).

In terms of domain architecture, Glutamine amidotransferase type-1 spans 13-204 (AIVILDFGSQ…VYHICGCEPD (192 aa)). Residue cysteine 90 is the Nucleophile of the active site. Catalysis depends on residues histidine 178 and glutamate 180. In terms of domain architecture, GMPS ATP-PPase spans 205-403 (WTTSAFIDEA…LGLPEEIVRR (199 aa)). 232 to 238 (SGGVDSS) lines the ATP pocket.

As to quaternary structure, homodimer.

It catalyses the reaction XMP + L-glutamine + ATP + H2O = GMP + L-glutamate + AMP + diphosphate + 2 H(+). It participates in purine metabolism; GMP biosynthesis; GMP from XMP (L-Gln route): step 1/1. Its function is as follows. Catalyzes the synthesis of GMP from XMP. The chain is GMP synthase [glutamine-hydrolyzing] from Parasynechococcus marenigrum (strain WH8102).